A 267-amino-acid chain; its full sequence is Fibroin light chain (267 aa).

A signal peptide spans 1–16 (MLPFVLVLLVATSALA). Ser19 is modified (N-acetylserine; in short form). Residues Cys103 and Cys162 are joined by a disulfide bond.

In terms of assembly, silk fibroin elementary unit consists in a disulfide-linked heavy and light chain and a p25 glycoprotein in molar ratios of 6:6:1. This results in a complex of approximately 2.3 MDa. Post-translationally, partially N-terminally processed to yield a short form which lacks the first two residues of the long form. In terms of processing, the interchain disulfide bridge is essential for the intracellular transport and secretion of fibroin. As to expression, produced exclusively in the posterior (PSG) section of silk glands, which are essentially modified salivary glands.

The protein localises to the secreted. Functionally, it is likely that the major role of L-chain is to prevent the retention of H-chain in ER by forming the disulfide linkage. The protein is Fibroin light chain (FIBL) of Galleria mellonella (Greater wax moth).